We begin with the raw amino-acid sequence, 466 residues long: Tissue alpha-L-fucosidase (466 aa).

Residues 1–31 (MRAPGMRSRPAGPALLLLLLFLGAAESVRRA) form the signal peptide. Thr-170 carries the phosphothreonine modification. N-linked (GlcNAc...) asparagine glycans are attached at residues Asn-241, Asn-268, and Asn-382.

It belongs to the glycosyl hydrolase 29 family. As to quaternary structure, homotetramer.

It localises to the lysosome. It carries out the reaction an alpha-L-fucoside + H2O = L-fucose + an alcohol. It catalyses the reaction a neolactoside IV(2)-alpha-Fuc-nLc4Cer(d18:1(4E)) + H2O = a neolactoside nLc4Cer(d18:1(4E)) + L-fucose. The catalysed reaction is a neolactoside IV(2)-alpha-Fuc-nLc4Cer(d18:0) + H2O = a neolactoside nLc4Cer(d18:0) + L-fucose. Its function is as follows. Alpha-L-fucosidase is responsible for hydrolyzing the alpha-1,6-linked fucose joined to the reducing-end N-acetylglucosamine of the carbohydrate moieties of glycoproteins. This chain is Tissue alpha-L-fucosidase, found in Homo sapiens (Human).